A 141-amino-acid polypeptide reads, in one-letter code: Hemoglobin subunit alpha (141 aa).

The 141-residue stretch at 1 to 141 folds into the Globin domain; it reads VLSAADKTNV…VATVLTSKYR (141 aa). Phosphoserine is present on Ser-3. Lys-7 bears the N6-succinyllysine mark. The residue at position 8 (Thr-8) is a Phosphothreonine. The residue at position 11 (Lys-11) is an N6-succinyllysine. Lys-16 bears the N6-acetyllysine; alternate mark. At Lys-16 the chain carries N6-succinyllysine; alternate. Tyr-24 carries the phosphotyrosine modification. Ser-35 carries the post-translational modification Phosphoserine. Lys-40 is subject to N6-succinyllysine. A Phosphoserine modification is found at Ser-49. His-58 is an O2 binding site. His-87 provides a ligand contact to heme b. Residue Ser-102 is modified to Phosphoserine. Thr-108 carries the post-translational modification Phosphothreonine. Ser-124 bears the Phosphoserine mark. Thr-134 and Thr-137 each carry phosphothreonine. Phosphoserine is present on Ser-138.

Belongs to the globin family. Heterotetramer of two alpha chains and two beta chains. In terms of tissue distribution, red blood cells.

Involved in oxygen transport from the lung to the various peripheral tissues. Its function is as follows. Hemopressin acts as an antagonist peptide of the cannabinoid receptor CNR1. Hemopressin-binding efficiently blocks cannabinoid receptor CNR1 and subsequent signaling. The polypeptide is Hemoglobin subunit alpha (HBA) (Ctenodactylus gundi (Northern gundi)).